The primary structure comprises 353 residues: S-adenosylmethionine:tRNA ribosyltransferase-isomerase (353 aa).

The protein belongs to the QueA family. In terms of assembly, monomer.

It localises to the cytoplasm. It carries out the reaction 7-aminomethyl-7-carbaguanosine(34) in tRNA + S-adenosyl-L-methionine = epoxyqueuosine(34) in tRNA + adenine + L-methionine + 2 H(+). It participates in tRNA modification; tRNA-queuosine biosynthesis. Transfers and isomerizes the ribose moiety from AdoMet to the 7-aminomethyl group of 7-deazaguanine (preQ1-tRNA) to give epoxyqueuosine (oQ-tRNA). This Nitrosomonas europaea (strain ATCC 19718 / CIP 103999 / KCTC 2705 / NBRC 14298) protein is S-adenosylmethionine:tRNA ribosyltransferase-isomerase.